The following is a 435-amino-acid chain: Acetylcholine receptor-like protein cup-4 (435 aa).

Residues 1–24 (MRLLLIFTVIFVFYLAILKRDVNA) form the signal peptide. N-linked (GlcNAc...) asparagine glycosylation is found at asparagine 41, asparagine 68, asparagine 237, and asparagine 249. 2 helical membrane passes run 298-318 (VSFF…AIYL) and 341-361 (ITLF…HGVL). Asparagine 403 carries N-linked (GlcNAc...) asparagine glycosylation. A helical membrane pass occupies residues 413 to 433 (PLAGLAMFVYFVIMFILYLVV).

Belongs to the ligand-gated ion channel (TC 1.A.9) family. Acetylcholine receptor (TC 1.A.9.1) subfamily.

The protein resides in the cytoplasmic vesicle membrane. Functionally, thought to regulate endocytosis in coelomocytes through modulation of phospholipase C activity. Possible acetylcholine receptor. This Caenorhabditis briggsae protein is Acetylcholine receptor-like protein cup-4.